Consider the following 306-residue polypeptide: Ribonuclease Z (306 aa).

Zn(2+) is bound by residues His-63, His-65, Asp-67, His-68, His-140, Asp-211, and His-269. Asp-67 acts as the Proton acceptor in catalysis.

It belongs to the RNase Z family. In terms of assembly, homodimer. Requires Zn(2+) as cofactor.

The catalysed reaction is Endonucleolytic cleavage of RNA, removing extra 3' nucleotides from tRNA precursor, generating 3' termini of tRNAs. A 3'-hydroxy group is left at the tRNA terminus and a 5'-phosphoryl group is left at the trailer molecule.. Its function is as follows. Zinc phosphodiesterase, which displays some tRNA 3'-processing endonuclease activity. Probably involved in tRNA maturation, by removing a 3'-trailer from precursor tRNA. This Listeria welshimeri serovar 6b (strain ATCC 35897 / DSM 20650 / CCUG 15529 / CIP 8149 / NCTC 11857 / SLCC 5334 / V8) protein is Ribonuclease Z.